The chain runs to 528 residues: Tyrosine--tRNA ligase, cytoplasmic (528 aa).

M1 carries the post-translational modification N-acetylmethionine. G2 carries the post-translational modification N-acetylglycine; in Tyrosine--tRNA ligase, cytoplasmic, N-terminally processed. Y39 serves as a coordination point for L-tyrosine. Y39 serves as a coordination point for trans-resveratrol. The short motif at 44–52 (TTGKPHVAY) is the 'HIGH' region element. L-tyrosine contacts are provided by Y166, Q170, D173, and Q188. Positions 170 and 173 each coordinate trans-resveratrol. Residue K197 is modified to N6-acetyllysine. At S205 the chain carries Phosphoserine. K206 bears the N6-acetyllysine mark. Positions 222-226 (KMSSS) match the 'KMSKS' region motif. The Nuclear localization signal motif lies at 242–247 (KKKLKK). Residues 339 to 363 (AAYPDPSKQKPMAKGPAKNSEPEEV) form a disordered region. In terms of domain architecture, tRNA-binding spans 364–468 (IPSRLDIRVG…AGSAPGEHVF (105 aa)). S386 carries the post-translational modification Phosphoserine. N6-acetyllysine is present on residues K474, K482, and K490.

Belongs to the class-I aminoacyl-tRNA synthetase family. In terms of assembly, homodimer. Interacts (when binding to resveratrol) with PARP1; interaction stimulates the poly-ADP-ribosyltransferase activity of PARP1.

Its subcellular location is the cytoplasm. It localises to the nucleus. The enzyme catalyses tRNA(Tyr) + L-tyrosine + ATP = L-tyrosyl-tRNA(Tyr) + AMP + diphosphate + H(+). With respect to regulation, resveratrol strongly inhibits the tyrosine--tRNA ligase activity. Functionally, tyrosine--tRNA ligase that catalyzes the attachment of tyrosine to tRNA(Tyr) in a two-step reaction: tyrosine is first activated by ATP to form Tyr-AMP and then transferred to the acceptor end of tRNA(Tyr). Also acts as a positive regulator of poly-ADP-ribosylation in the nucleus, independently of its tyrosine--tRNA ligase activity. Activity is switched upon resveratrol-binding: resveratrol strongly inhibits the tyrosine--tRNA ligase activity and promotes relocalization to the nucleus, where YARS1 specifically stimulates the poly-ADP-ribosyltransferase activity of PARP1. This Homo sapiens (Human) protein is Tyrosine--tRNA ligase, cytoplasmic.